We begin with the raw amino-acid sequence, 380 residues long: MSTTVGQVIRCKAAVAWEAGKPLVMEEVDVAPPQKMEVRLKILYTSLCHTDVYFWEAKGQNPVFPRILGHEAAGIVESVGEGVTELAPGDHVLPVFTGECKDCAHCKSEESNMCSLLRINTDRGVMINDGQSRFSINGKPIYHFVGTSTFSEYTVVHVGCVAKINPLAPLDKVCVLSCGISTGLGATLNVAKPTKGSSVAIFGLGAVGLAAAEGARIAGASRIIGVDLNASRFEQAKKFGVTEFVNPKDYSKPVQEVIAEMTDGGVDRSVECTGHIDAMISAFECVHDGWGVAVLVGVPHKEAVFKTHPMNFLNERTLKGTFFGNYKPRSDIPSVVEKYMNKELELEKFITHTLPFAEINKAFDLMLKGEGLRCIITMED.

Positions 48, 50, 70, 100, 103, 106, 114, and 178 each coordinate Zn(2+). An alcohol-binding residues include Thr-50 and His-70. Residue Thr-50 coordinates NAD(+). NAD(+) contacts are provided by residues 203–208 (GLGAVG), Asp-227, Arg-232, Thr-273, Val-296, 296–298 (VGV), Phe-323, and Arg-373.

It belongs to the zinc-containing alcohol dehydrogenase family. As to quaternary structure, homodimer. Homotetramer. Zn(2+) is required as a cofactor.

It is found in the cytoplasm. It carries out the reaction a primary alcohol + NAD(+) = an aldehyde + NADH + H(+). It catalyses the reaction a secondary alcohol + NAD(+) = a ketone + NADH + H(+). This is Alcohol dehydrogenase 3 (ADH3) from Solanum tuberosum (Potato).